A 447-amino-acid polypeptide reads, in one-letter code: Putative branched-chain amino acid carrier protein SH1502 (447 aa).

13 helical membrane-spanning segments follow: residues 6–26, 40–60, 74–94, 116–136, 143–163, 193–213, 229–249, 270–287, 290–310, 328–348, 350–370, 382–402, and 417–437; these read WIVG…IFPP, VIAF…VGAL, PKFS…LFAI, LVLF…CINP, IGSL…IKGF, GYLT…VNAI, VMSG…LGFI, VGAY…GVFG, LLGI…IVSV, IFFT…VISM, VPVL…ILLA, IPIA…NGWV, and LEWF…AKFV.

The protein belongs to the branched chain amino acid transporter family.

It is found in the cell membrane. In terms of biological role, component of the transport system for branched-chain amino acids (leucine, isoleucine and valine), which is coupled to a proton motive force. In Staphylococcus haemolyticus (strain JCSC1435), this protein is Putative branched-chain amino acid carrier protein SH1502.